The primary structure comprises 161 residues: MAAKATSEKGFKTITDNRRARHEYHVIETYEAGIALSGTEVKSLRAGKANLQDAFARVENGEMMLYNLHISPYEQGNRFNHEPKRTRRLLMHKQEILRLYGKVREKGLALIPLKVYFNPRGKVKVQLALAQGKKSYDKRHDIAARDAKRDMDRAMRERQKM.

The protein belongs to the SmpB family.

The protein resides in the cytoplasm. In terms of biological role, required for rescue of stalled ribosomes mediated by trans-translation. Binds to transfer-messenger RNA (tmRNA), required for stable association of tmRNA with ribosomes. tmRNA and SmpB together mimic tRNA shape, replacing the anticodon stem-loop with SmpB. tmRNA is encoded by the ssrA gene; the 2 termini fold to resemble tRNA(Ala) and it encodes a 'tag peptide', a short internal open reading frame. During trans-translation Ala-aminoacylated tmRNA acts like a tRNA, entering the A-site of stalled ribosomes, displacing the stalled mRNA. The ribosome then switches to translate the ORF on the tmRNA; the nascent peptide is terminated with the 'tag peptide' encoded by the tmRNA and targeted for degradation. The ribosome is freed to recommence translation, which seems to be the essential function of trans-translation. In Desulforamulus reducens (strain ATCC BAA-1160 / DSM 100696 / MI-1) (Desulfotomaculum reducens), this protein is SsrA-binding protein.